Consider the following 63-residue polypeptide: Large ribosomal subunit protein bL28 (63 aa).

Belongs to the bacterial ribosomal protein bL28 family.

This is Large ribosomal subunit protein bL28 from Geobacter sulfurreducens (strain ATCC 51573 / DSM 12127 / PCA).